Here is a 115-residue protein sequence, read N- to C-terminus: Large ribosomal subunit protein bL19 (115 aa).

The protein belongs to the bacterial ribosomal protein bL19 family.

Functionally, this protein is located at the 30S-50S ribosomal subunit interface and may play a role in the structure and function of the aminoacyl-tRNA binding site. The protein is Large ribosomal subunit protein bL19 of Tropheryma whipplei (strain TW08/27) (Whipple's bacillus).